The sequence spans 316 residues: Aspartate carbamoyltransferase catalytic subunit (316 aa).

Residues Arg58 and Thr59 each coordinate carbamoyl phosphate. Lys86 is an L-aspartate binding site. Carbamoyl phosphate is bound by residues Arg108, His136, and Gln139. The L-aspartate site is built by Arg169 and Arg223. Carbamoyl phosphate contacts are provided by Gly265 and Pro266.

Belongs to the aspartate/ornithine carbamoyltransferase superfamily. ATCase family. As to quaternary structure, heterododecamer (2C3:3R2) of six catalytic PyrB chains organized as two trimers (C3), and six regulatory PyrI chains organized as three dimers (R2).

The enzyme catalyses carbamoyl phosphate + L-aspartate = N-carbamoyl-L-aspartate + phosphate + H(+). The protein operates within pyrimidine metabolism; UMP biosynthesis via de novo pathway; (S)-dihydroorotate from bicarbonate: step 2/3. Its function is as follows. Catalyzes the condensation of carbamoyl phosphate and aspartate to form carbamoyl aspartate and inorganic phosphate, the committed step in the de novo pyrimidine nucleotide biosynthesis pathway. This Anaeromyxobacter sp. (strain Fw109-5) protein is Aspartate carbamoyltransferase catalytic subunit.